Here is a 126-residue protein sequence, read N- to C-terminus: Holo-[acyl-carrier-protein] synthase (126 aa).

Mg(2+) contacts are provided by Asp-9 and Glu-58.

Belongs to the P-Pant transferase superfamily. AcpS family. The cofactor is Mg(2+).

The protein localises to the cytoplasm. It catalyses the reaction apo-[ACP] + CoA = holo-[ACP] + adenosine 3',5'-bisphosphate + H(+). Transfers the 4'-phosphopantetheine moiety from coenzyme A to a Ser of acyl-carrier-protein. This is Holo-[acyl-carrier-protein] synthase from Escherichia coli O127:H6 (strain E2348/69 / EPEC).